A 106-amino-acid chain; its full sequence is Glycine/glutamate-rich protein sgp1 (106 aa).

An N-terminal signal peptide occupies residues Met-1–Ala-20. The interval Ala-20–Gly-66 is disordered. Residues Pro-22–Lys-45 are compositionally biased toward basic and acidic residues. Over residues Gly-50 to Gly-66 the composition is skewed to gly residues.

The protein resides in the secreted. This chain is Glycine/glutamate-rich protein sgp1 (sgp1), found in Glossina morsitans morsitans (Savannah tsetse fly).